Here is a 369-residue protein sequence, read N- to C-terminus: Endophilin-A (369 aa).

A BAR domain is found at 18–248 (TEKMGGAEGT…LQEKRSEAES (231 aa)). The stretch at 227-247 (QCADVLRGLQETLQEKRSEAE) forms a coiled coil. The segment at 266-295 (GGGGGLNEDGTPSHISSSASPLPSPMRSPA) is disordered. Low complexity predominate over residues 277-294 (PSHISSSASPLPSPMRSP). Residues 305–364 (QQQPCCQALYDFEPENPGELAFKENDIITLLNRVDDNWFEGAVNGRTGYFPQSYVQVQVP) enclose the SH3 domain.

Belongs to the endophilin family.

The protein resides in the cytoplasm. Its subcellular location is the membrane. Functionally, required presynaptically at the neuromuscular junction. Implicated in synaptic vesicle endocytosis. This chain is Endophilin-A, found in Drosophila erecta (Fruit fly).